Here is a 268-residue protein sequence, read N- to C-terminus: Tryptophan synthase alpha chain (268 aa).

Active-site proton acceptor residues include Glu49 and Asp60.

The protein belongs to the TrpA family. In terms of assembly, tetramer of two alpha and two beta chains.

The catalysed reaction is (1S,2R)-1-C-(indol-3-yl)glycerol 3-phosphate + L-serine = D-glyceraldehyde 3-phosphate + L-tryptophan + H2O. It participates in amino-acid biosynthesis; L-tryptophan biosynthesis; L-tryptophan from chorismate: step 5/5. The alpha subunit is responsible for the aldol cleavage of indoleglycerol phosphate to indole and glyceraldehyde 3-phosphate. The protein is Tryptophan synthase alpha chain of Yersinia enterocolitica serotype O:8 / biotype 1B (strain NCTC 13174 / 8081).